The following is a 325-amino-acid chain: Serpentine receptor class delta-59 (325 aa).

Transmembrane regions (helical) follow at residues 14–34 (WYWP…LHLI), 45–65 (LKIF…FAFL), 75–95 (ISAA…TCFI), 97–117 (YHVF…TVLF), 132–152 (TYIM…IPFT), 190–210 (FLSA…GCLI), 235–255 (TLIH…IPSF), and 275–295 (ILVS…YFIV).

This sequence belongs to the nematode receptor-like protein srd family.

It is found in the membrane. This Caenorhabditis elegans protein is Serpentine receptor class delta-59 (srd-59).